A 92-amino-acid polypeptide reads, in one-letter code: UPF0335 protein BMEI0289 (92 aa).

The protein belongs to the UPF0335 family.

In Brucella melitensis biotype 1 (strain ATCC 23456 / CCUG 17765 / NCTC 10094 / 16M), this protein is UPF0335 protein BMEI0289.